A 250-amino-acid chain; its full sequence is Thermostable monoacylglycerol lipase (250 aa).

Phenylalanine 29 lines the substrate pocket. Serine 97 acts as the Nucleophile in catalysis. Methionine 98 serves as a coordination point for substrate. Active-site charge relay system residues include aspartate 196 and histidine 226.

This sequence belongs to the lipase/esterase LIP3/BchO family. In terms of assembly, monomer.

The enzyme catalyses Hydrolyzes glycerol monoesters of long-chain fatty acids.. With respect to regulation, not inhibited by cholate, but slightly inhibited by triton X-100 and deoxycholate. Completely inhibited by PMSF (phenylmethylsulfonyl fluoride) at a concentration of 200 uM. Its function is as follows. Hydrolyzes monoacylglycerols, with the highest activity occurring with 1-monolauroylglycerol. This Bacillus sp. (strain H-257) protein is Thermostable monoacylglycerol lipase.